Reading from the N-terminus, the 159-residue chain is Mitotic-spindle organizing protein 2 (159 aa).

Residues 87–159 (LASDPQDSVP…SGKSNSRSSP (73 aa)) are disordered. The span at 91-105 (PQDSVPISLSTSTSE) shows a compositional bias: polar residues. Arg-111 bears the Omega-N-methylarginine mark. Ser-153 carries the phosphoserine modification.

The protein belongs to the MOZART2 family. In terms of assembly, associates with the gamma-tubulin ring complex (gTuRC) consisting of TUBGCP2, TUBGCP3, TUBGCP4, TUBGCP5 and TUBGCP6 and gamma-tubulin TUBG1 or TUBG2; within the complex, interacts with TUBGCP2; the interaction plays a role in gTuRC activation.

It is found in the cytoplasm. The protein resides in the cytoskeleton. The protein localises to the microtubule organizing center. It localises to the centrosome. Its subcellular location is the spindle. In terms of biological role, required for the recruitment and the assembly of the gamma-tubulin ring complex (gTuRC) at the centrosome. The gTuRC regulates the minus-end nucleation of alpha-beta tubulin heterodimers that grow into microtubule protafilaments, a critical step in centrosome duplication and spindle formation. The sequence is that of Mitotic-spindle organizing protein 2 (Mzt2) from Mus musculus (Mouse).